Here is a 173-residue protein sequence, read N- to C-terminus: Cytochrome c-type biogenesis protein CcmE (173 aa).

At 1–8 (MMSRKKRR) the chain is on the cytoplasmic side. Residues 9 to 29 (LWIVIACGIGLSTAVALMLFA) form a helical; Signal-anchor for type II membrane protein membrane-spanning segment. Residues 30-173 (FRSSLSFFMS…PAQIEASNNG (144 aa)) lie on the Periplasmic side of the membrane. Residues His-127 and Tyr-131 each contribute to the heme site. A disordered region spans residues 145–173 (KWNPKFGPPPNAGAWDDKSPAQIEASNNG).

It belongs to the CcmE/CycJ family.

Its subcellular location is the cell inner membrane. In terms of biological role, heme chaperone required for the biogenesis of c-type cytochromes. Transiently binds heme delivered by CcmC and transfers the heme to apo-cytochromes in a process facilitated by CcmF and CcmH. The protein is Cytochrome c-type biogenesis protein CcmE of Acidiphilium cryptum (strain JF-5).